The sequence spans 108 residues: Protein SMALL AUXIN UP-REGULATED RNA 51 (108 aa).

It belongs to the ARG7 family. Expressed in organ primordia. Hardly observed in leaves.

It localises to the cell membrane. Functionally, provide a mechanistic link between auxin and plasma membrane H(+)-ATPases (PM H(+)-ATPases, e.g. AHA1 and AHA2), and triggers PM H(+)-ATPases activity by promoting phosphorylation of their C-terminal autoinhibitory domain as a result of PP2C-D subfamily of type 2C phosphatases inhibition, thus leading to the acidification of the apoplast and the facilitation of solutes and water uptake to drive cell expansion. Triggers plant growth probably by promoting cell elongation. Regulates branch angles and bending. The polypeptide is Protein SMALL AUXIN UP-REGULATED RNA 51 (Arabidopsis thaliana (Mouse-ear cress)).